The sequence spans 1665 residues: Mediator of RNA polymerase II transcription subunit 13 (1665 aa).

4 disordered regions span residues 411–460 (KETE…IDKN), 482–512 (INLDSKIMPPDSTSEEAVPDKENFKPKETKP), 551–580 (TVSQSAVTTNPPSVGSAPGPAPGPAPGTET), and 673–781 (LDSS…NQIS). Residues 415-445 (PENESENDMEIDDLFGGDESDDNDDLEEAGN) are compositionally biased toward acidic residues. The segment covering 499–512 (VPDKENFKPKETKP) has biased composition (basic and acidic residues). Residues 551–568 (TVSQSAVTTNPPSVGSAP) are compositionally biased toward low complexity. A compositionally biased stretch (acidic residues) spans 682-720 (EGGEDIEDDDNDYEDEGDDDEEEEGEEEEEEESDEDEIS). Residues 728 to 762 (LKLNTQNESVPPQQSNYNPVNITDSGSNTTNNITD) are compositionally biased toward polar residues.

This sequence belongs to the Mediator complex subunit 13 family. In terms of assembly, component of the SRB8-11 complex, which itself associates with the Mediator complex.

It localises to the nucleus. Component of the SRB8-11 complex. The SRB8-11 complex is a regulatory module of the Mediator complex which is itself involved in regulation of basal and activated RNA polymerase II-dependent transcription. The SRB8-11 complex may be involved in the transcriptional repression of a subset of genes regulated by Mediator. It may inhibit the association of the Mediator complex with RNA polymerase II to form the holoenzyme complex. The chain is Mediator of RNA polymerase II transcription subunit 13 (SSN2) from Candida albicans (strain SC5314 / ATCC MYA-2876) (Yeast).